Reading from the N-terminus, the 246-residue chain is Probable H/ACA ribonucleoprotein complex subunit 1-like protein (246 aa).

Disordered stretches follow at residues 1-61 (MSFR…GGYD) and 155-246 (PQVG…TKFD). RGG-box stretches follow at residues 4–59 (RGGR…GRGG) and 161–223 (RGRG…RGRG). The segment covering 168–180 (RGGDRGRGGDRGR) has biased composition (basic and acidic residues). Residues 181–221 (GGFGGRGGGGGGFRGGSRGGFGGGDRGGFRGGRGGDFGGRG) are compositionally biased toward gly residues.

It belongs to the GAR1 family. As to quaternary structure, component of the small nucleolar ribonucleoprotein particle containing H/ACA-type snoRNAs (H/ACA snoRNPs).

It localises to the nucleus. The protein localises to the nucleolus. Functionally, required for ribosome biogenesis. Part of a complex which catalyzes pseudouridylation of rRNA. This involves the isomerization of uridine such that the ribose is subsequently attached to C5, instead of the normal N1. Pseudouridine ('psi') residues may serve to stabilize the conformation of rRNAs. This is Probable H/ACA ribonucleoprotein complex subunit 1-like protein from Caenorhabditis briggsae.